The primary structure comprises 810 residues: Zinc finger CCCH domain-containing protein 11A (810 aa).

C3H1-type zinc fingers lie at residues 2–29, 31–57, and 60–86; these read PNQG…HCEA, IGNE…HMEI, and KRSE…HHNR. Ser108 is modified (phosphoserine). Residues Lys114 and Lys124 each participate in a glycyl lysine isopeptide (Lys-Gly) (interchain with G-Cter in SUMO2) cross-link. A Phosphoserine modification is found at Ser132. 4 disordered regions span residues 139-194, 223-258, 285-351, and 367-432; these read MKVE…GLRV, KKMK…ENVR, GKRK…DKVN, and ERAS…TTCI. Lys140 is covalently cross-linked (Glycyl lysine isopeptide (Lys-Gly) (interchain with G-Cter in SUMO2)). Phosphoserine is present on residues Ser149 and Ser171. Acidic residues predominate over residues 160–175; it reads ADDDEDDDDQFSEEGD. Residue Ser290 is modified to Phosphoserine. 2 stretches are compositionally biased toward basic and acidic residues: residues 309-322 and 367-390; these read KKVE…DKTP and ERAS…KTDD. Thr321 carries the post-translational modification Phosphothreonine. The stretch at 362-423 forms a coiled coil; the sequence is EEILLERASQ…KHRQQEAERQ (62 aa). Phosphoserine is present on Ser370. The segment covering 391–402 has biased composition (polar residues); it reads STSGARSSSTIR. Basic and acidic residues predominate over residues 417–432; that stretch reads QQEAERQKSKKDTTCI. Lys478 is covalently cross-linked (Glycyl lysine isopeptide (Lys-Gly) (interchain with G-Cter in SUMO2)). The disordered stretch occupies residues 482-549; the sequence is ALRVQQSSES…KEASGETTGV (68 aa). The span at 486–498 shows a compositional bias: low complexity; it reads QQSSESSTSSPSQ. Residue Lys619 forms a Glycyl lysine isopeptide (Lys-Gly) (interchain with G-Cter in SUMO2) linkage. The segment at 715-768 is disordered; it reads TVPEAENPRDSLVLPPTQSSSDSSPPEVSGPSSSQMSMKTRRLSSASTGKPPLS. Residues 729-748 show a composition bias toward low complexity; it reads PPTQSSSDSSPPEVSGPSSS. Positions 749–762 are enriched in polar residues; it reads QMSMKTRRLSSAST.

Interacts with TREX complex components THOC2, DDX39 and POLDIP3; the interactions are ATP-dependent. Interacts with PABPN1; this interaction retains ZC3H11A in nuclear speckles. Interacts with KPNA3.

It localises to the nucleus. The protein localises to the nucleus speckle. Its function is as follows. Through its association with TREX complex components, may participate in the export and post-transcriptional coordination of selected mRNA transcripts, including those required to maintain the metabolic processes in embryonic cells. Binds RNA. In terms of biological role, (Microbial infection) Plays a role in efficient growth of several nuclear-replicating viruses such as HIV-1, influenza virus or herpes simplex virus 1/HHV-1. Required for efficient viral mRNA export. May be required for proper polyadenylation of adenovirus type 5/HAdV-5 capsid mRNA. The chain is Zinc finger CCCH domain-containing protein 11A (ZC3H11A) from Homo sapiens (Human).